The chain runs to 109 residues: Flagellar hook-basal body complex protein FliE (109 aa).

The protein belongs to the FliE family.

The protein localises to the bacterial flagellum basal body. In Pseudomonas aeruginosa (strain LESB58), this protein is Flagellar hook-basal body complex protein FliE.